The chain runs to 456 residues: Histidine--tRNA ligase (456 aa).

Belongs to the class-II aminoacyl-tRNA synthetase family. Homodimer.

It localises to the cytoplasm. The catalysed reaction is tRNA(His) + L-histidine + ATP = L-histidyl-tRNA(His) + AMP + diphosphate + H(+). The sequence is that of Histidine--tRNA ligase from Borrelia garinii subsp. bavariensis (strain ATCC BAA-2496 / DSM 23469 / PBi) (Borreliella bavariensis).